Here is a 387-residue protein sequence, read N- to C-terminus: Palmitoyltransferase ZDHHC16A (387 aa).

2 helical membrane-spanning segments follow: residues 73–93 (WFGM…VFIA) and 106–126 (SPGW…MIVF). The DHHC domain occupies 150–200 (SVCKKCIIPKPARSHHCGICKTCILKMDHHCPWLNNCVGHFNHRYFFSFCL). Catalysis depends on Cys-180, which acts as the S-palmitoyl cysteine intermediate. The next 3 helical transmembrane spans lie at 198 to 218 (FCLF…HLFI), 236 to 256 (GVPV…GVAG), and 281 to 301 (VIYM…LTLW).

The protein belongs to the DHHC palmitoyltransferase family. Expressed in the central nervous system (CNS). Expressed in the developing forebrain, and especially in the telencephalon.

Its subcellular location is the endoplasmic reticulum membrane. The enzyme catalyses L-cysteinyl-[protein] + hexadecanoyl-CoA = S-hexadecanoyl-L-cysteinyl-[protein] + CoA. In terms of biological role, palmitoyl acyltransferase that mediates palmitoylation of proteins and is required during embryonic heart development. Involved in the proliferation of neural stem cells by regulating the FGF/ERK pathway. Involved in the proliferation of neural stem cells by regulating the FGF/ERK pathway. The protein is Palmitoyltransferase ZDHHC16A of Danio rerio (Zebrafish).